The primary structure comprises 591 residues: Potassium-transporting ATPase potassium-binding subunit (591 aa).

Transmembrane regions (helical) follow at residues Trp-6–Phe-26, Trp-63–Ile-83, Gly-137–Ile-157, Val-179–Val-199, Leu-272–Leu-292, Trp-303–Ala-323, Ala-405–Val-425, Ala-444–Val-464, Val-510–Ile-530, and Leu-553–Ala-573.

It belongs to the KdpA family. In terms of assembly, the system is composed of three essential subunits: KdpA, KdpB and KdpC.

It is found in the cell inner membrane. Functionally, part of the high-affinity ATP-driven potassium transport (or Kdp) system, which catalyzes the hydrolysis of ATP coupled with the electrogenic transport of potassium into the cytoplasm. This subunit binds the periplasmic potassium ions and delivers the ions to the membrane domain of KdpB through an intramembrane tunnel. This chain is Potassium-transporting ATPase potassium-binding subunit, found in Koribacter versatilis (strain Ellin345).